Reading from the N-terminus, the 108-residue chain is Kanamycin resistance protein (108 aa).

In terms of domain architecture, N-acetyltransferase spans 1-99; it reads SRTLLLERGR…PAVYMVQTRQ (99 aa).

The polypeptide is Kanamycin resistance protein (Rhizobium radiobacter (Agrobacterium tumefaciens)).